Reading from the N-terminus, the 567-residue chain is MKISRQAYADMYGPTVGDRVRLGDTELWIEVEEDHTHYGDEVKFGGGKVIRDGMGQSQRCDDAVMDTVITNALILDWWGIVKADVGIQKGRIAAIGKAGNPDTQPDVTIVIGPGTEIIAGEGKILTAGGIDPHIHFICPQQVEEALMSGVTTMLGGGTGPATGTNATTCTPGPWHIGKMLQAVDSLPMNIGFLGKGNASLPEALELQIKAGVIGLKLHEDWGTTPASIDNCLTVADQYDIQVAIHTDTLNESGFVEDTLAAFKGRCIHTFHTEGAGGGHAPDIITACSKDYVLPSSTNPTRPYTVNTVDEHLDMLMVCHHLDPNIPEDVAFADSRIRRETIAAEDILHDMGVISMISSDSQAMGRVGEVICRTWQTAHKMKVQRGLLPEDQERGADNFRAKRYIAKYTINPAITHGIAHDVGSVEVGKLADLVLWSPAFFGVKPACILKGGMIAAAPMGDPNASIPTPQPVHYRPMFGAFGKAASATRLTFVSQAALDAKIGEELGLDSPLSACKGVREVRKRHMKLNDACPHLTVDPQTYEVHADGELLTCEPATELPLAQLYHLF.

Residues 128 to 567 enclose the Urease domain; it reads GGIDPHIHFI…LPLAQLYHLF (440 aa). 3 residues coordinate Ni(2+): histidine 133, histidine 135, and lysine 216. N6-carboxylysine is present on lysine 216. Histidine 218 serves as a coordination point for substrate. Ni(2+)-binding residues include histidine 245 and histidine 271. Residue histidine 319 is the Proton donor of the active site. Residue aspartate 359 participates in Ni(2+) binding.

The protein belongs to the metallo-dependent hydrolases superfamily. Urease alpha subunit family. In terms of assembly, heterotrimer of UreA (gamma), UreB (beta) and UreC (alpha) subunits. Three heterotrimers associate to form the active enzyme. The cofactor is Ni cation. Carboxylation allows a single lysine to coordinate two nickel ions.

The protein resides in the cytoplasm. The enzyme catalyses urea + 2 H2O + H(+) = hydrogencarbonate + 2 NH4(+). It functions in the pathway nitrogen metabolism; urea degradation; CO(2) and NH(3) from urea (urease route): step 1/1. This is Urease subunit alpha from Marinobacter nauticus (strain ATCC 700491 / DSM 11845 / VT8) (Marinobacter aquaeolei).